The chain runs to 302 residues: Acetaldehyde dehydrogenase 2 (302 aa).

Cys130 serves as the catalytic Acyl-thioester intermediate. NAD(+)-binding positions include 161–169 and Asn272; that span reads SVGPGTRRN.

It belongs to the acetaldehyde dehydrogenase family.

The enzyme catalyses acetaldehyde + NAD(+) + CoA = acetyl-CoA + NADH + H(+). The chain is Acetaldehyde dehydrogenase 2 from Cupriavidus necator (strain ATCC 17699 / DSM 428 / KCTC 22496 / NCIMB 10442 / H16 / Stanier 337) (Ralstonia eutropha).